A 69-amino-acid chain; its full sequence is Sperm protamine P1 (69 aa).

Basic residues-rich tracts occupy residues 1–30 (MARF…RRGG) and 37–69 (KITR…RRRN). Positions 1–69 (MARFRPSRSR…SRRRRRRRRN (69 aa)) are disordered.

Belongs to the protamine P1 family. In terms of tissue distribution, testis.

The protein localises to the nucleus. It localises to the chromosome. Protamines substitute for histones in the chromatin of sperm during the haploid phase of spermatogenesis. They compact sperm DNA into a highly condensed, stable and inactive complex. The sequence is that of Sperm protamine P1 (PRM1) from Tachyglossus aculeatus aculeatus (Southeast Australian short-beaked echidna).